A 455-amino-acid chain; its full sequence is Chromosomal replication initiator protein DnaA (455 aa).

The domain I, interacts with DnaA modulators stretch occupies residues 1–75; the sequence is MLERNDLWNL…AMQATNEQIR (75 aa). Residues 75-117 are domain II; sequence RPVMITEEERQQLTRDKDSQVTTGNVAGQQPTTATTPTFMRET. Residues 84-93 show a composition bias toward basic and acidic residues; the sequence is RQQLTRDKDS. Residues 84–107 form a disordered region; that stretch reads RQQLTRDKDSQVTTGNVAGQQPTT. Residues 118–334 form a domain III, AAA+ region region; the sequence is KLNPKYTFDT…GALARVQAYS (217 aa). Glycine 162, glycine 164, lysine 165, and threonine 166 together coordinate ATP. Residues 335–455 form a domain IV, binds dsDNA region; the sequence is RLNNSPITTS…VGDLTGQLKS (121 aa).

This sequence belongs to the DnaA family. As to quaternary structure, oligomerizes as a right-handed, spiral filament on DNA at oriC.

It localises to the cytoplasm. Its function is as follows. Plays an essential role in the initiation and regulation of chromosomal replication. ATP-DnaA binds to the origin of replication (oriC) to initiate formation of the DNA replication initiation complex once per cell cycle. Binds the DnaA box (a 9 base pair repeat at the origin) and separates the double-stranded (ds)DNA. Forms a right-handed helical filament on oriC DNA; dsDNA binds to the exterior of the filament while single-stranded (ss)DNA is stabiized in the filament's interior. The ATP-DnaA-oriC complex binds and stabilizes one strand of the AT-rich DNA unwinding element (DUE), permitting loading of DNA polymerase. After initiation quickly degrades to an ADP-DnaA complex that is not apt for DNA replication. Binds acidic phospholipids. In Lactiplantibacillus plantarum (strain ATCC BAA-793 / NCIMB 8826 / WCFS1) (Lactobacillus plantarum), this protein is Chromosomal replication initiator protein DnaA.